A 454-amino-acid chain; its full sequence is NADH-quinone oxidoreductase subunit H (454 aa).

Helical transmembrane passes span 18–38, 88–108, 131–151, 172–192, 206–226, 256–276, 296–316, 328–348, and 360–380; these read WWLVVVKAVFCFAFLMITVLF, VVYVLAPIVAAIPAFMAIAVI, LPIAMLYILAVASVGIYGIVL, MISYEIAMGAAFASVFLYSGS, WYIVLLPVSFVIYIVTMVGET, FMLAEYVNMVTVSAVSTTLFL, WWPMLWFVVKVQLLLFFFIWL, LMKLGWKVLIPVSVVWLMLVA, and FADIALYVGGGVLVLLLLSFV. Residues 395–454 form a disordered region; that stretch reads AEEPAAFDPMAGGFPVPPLPGQTLPPVPRRRPRRDRELIVSGGPDTASDGPANGKEASDG. Residues 409 to 421 show a composition bias toward pro residues; sequence PVPPLPGQTLPPV.

It belongs to the complex I subunit 1 family. In terms of assembly, NDH-1 is composed of 14 different subunits. Subunits NuoA, H, J, K, L, M, N constitute the membrane sector of the complex.

It is found in the cell membrane. It catalyses the reaction a quinone + NADH + 5 H(+)(in) = a quinol + NAD(+) + 4 H(+)(out). Its function is as follows. NDH-1 shuttles electrons from NADH, via FMN and iron-sulfur (Fe-S) centers, to quinones in the respiratory chain. The immediate electron acceptor for the enzyme in this species is believed to be ubiquinone. Couples the redox reaction to proton translocation (for every two electrons transferred, four hydrogen ions are translocated across the cytoplasmic membrane), and thus conserves the redox energy in a proton gradient. This subunit may bind ubiquinone. The polypeptide is NADH-quinone oxidoreductase subunit H (Streptomyces avermitilis (strain ATCC 31267 / DSM 46492 / JCM 5070 / NBRC 14893 / NCIMB 12804 / NRRL 8165 / MA-4680)).